The following is a 426-amino-acid chain: Enolase (426 aa).

Glutamine 162 is a binding site for (2R)-2-phosphoglycerate. Catalysis depends on glutamate 204, which acts as the Proton donor. Mg(2+)-binding residues include aspartate 241, glutamate 286, and aspartate 313. (2R)-2-phosphoglycerate-binding residues include lysine 338, arginine 367, serine 368, and lysine 389. Catalysis depends on lysine 338, which acts as the Proton acceptor.

The protein belongs to the enolase family. Requires Mg(2+) as cofactor.

It localises to the cytoplasm. The protein localises to the secreted. Its subcellular location is the cell surface. It carries out the reaction (2R)-2-phosphoglycerate = phosphoenolpyruvate + H2O. It functions in the pathway carbohydrate degradation; glycolysis; pyruvate from D-glyceraldehyde 3-phosphate: step 4/5. Catalyzes the reversible conversion of 2-phosphoglycerate (2-PG) into phosphoenolpyruvate (PEP). It is essential for the degradation of carbohydrates via glycolysis. The polypeptide is Enolase (Aliarcobacter butzleri (strain RM4018) (Arcobacter butzleri)).